The chain runs to 832 residues: Armadillo segment polarity protein (832 aa).

Over residues 1–20 (MSYQMPQNRTMSHNPYNSSD) the composition is skewed to polar residues. Residues 1–24 (MSYQMPQNRTMSHNPYNSSDMPMP) are disordered. 9 ARM repeats span residues 146–185 (NYQD…QLSK), 188–228 (ASRH…NLSH), 230–269 (RQGL…NLLL), 272–311 (DGSK…ILAY), 356–395 (SSNK…NLSD), 397–434 (ATKV…NLTC), 483–524 (SESA…NLAL), 594–634 (ELNR…ELAV), and 636–675 (KEVA…KMSE). A disordered region spans residues 721–832 (AYEGLYGQGP…QVAAWYDTDL (112 aa)). Residues 767 to 777 (PAGSNPNAGNN) show a composition bias toward low complexity.

The protein belongs to the beta-catenin family.

It is found in the cytoplasm. Its subcellular location is the cell membrane. It localises to the cell junction. The protein resides in the adherens junction. May associate with CadN and participate in the transmission of developmental information. Can associate with alpha-catenin. Accumulates through wg signaling; arm function in wg signal transduction is required early in development for determination of neuroblast fate. Arm and Abl proteins function cooperatively at adherens junctions in both the CNS and epidermis. This chain is Armadillo segment polarity protein, found in Aedes aegypti (Yellowfever mosquito).